A 329-amino-acid chain; its full sequence is Malate dehydrogenase (329 aa).

G13 to S19 is a binding site for NAD(+). Residues R94 and R100 each contribute to the substrate site. NAD(+)-binding positions include N107, Q114, and V131–N133. 2 residues coordinate substrate: N133 and R164. Catalysis depends on H189, which acts as the Proton acceptor.

Belongs to the LDH/MDH superfamily. MDH type 2 family.

The catalysed reaction is (S)-malate + NAD(+) = oxaloacetate + NADH + H(+). Functionally, catalyzes the reversible oxidation of malate to oxaloacetate. This chain is Malate dehydrogenase, found in Psychrobacter arcticus (strain DSM 17307 / VKM B-2377 / 273-4).